Here is a 62-residue protein sequence, read N- to C-terminus: MQHNKENHFVEDAKQFQEKAKLYQGNYYTLDGELITIIPSSKEGFRSCKSLYYKKKQPIPGR.

This is an uncharacterized protein from Schizosaccharomyces pombe (strain 972 / ATCC 24843) (Fission yeast).